The primary structure comprises 383 residues: MNSKLVLIVAGEASGDLHGASLVGAMVKREPGIRFYGIGGVNLKTAGVDLWADAADMAVVGLTEVASKLRGILTVMHRLKKSMQLLKPDLVILIDYPDFNLPLARSAKKNGIPVFYYISPQVWAWRKGRLRTISGLVDRMAVILPFEEPLYRQAGVDVSFVGHPLLDVVQATSSRDETLRMFGLREDVTTVALLPGSRKGEVTRLLPVMLKAARILTENICPVQFLLPMANTLDETWMKDQIAKADPPGVRLIRGATYDAVAAADAAVVVSGTATLETALLGTPLIVIYKVSALSYLIGRMLISVDHIGLVNIVAGKTVAPELIQGAANPERIAAEILAILGQPDRRKAIQEELSHLRDKLGLPGAAERAAVMALTLIKKSDC.

Belongs to the LpxB family.

The enzyme catalyses a lipid X + a UDP-2-N,3-O-bis[(3R)-3-hydroxyacyl]-alpha-D-glucosamine = a lipid A disaccharide + UDP + H(+). The protein operates within bacterial outer membrane biogenesis; LPS lipid A biosynthesis. In terms of biological role, condensation of UDP-2,3-diacylglucosamine and 2,3-diacylglucosamine-1-phosphate to form lipid A disaccharide, a precursor of lipid A, a phosphorylated glycolipid that anchors the lipopolysaccharide to the outer membrane of the cell. This chain is Lipid-A-disaccharide synthase, found in Syntrophus aciditrophicus (strain SB).